The chain runs to 414 residues: Lysocardiolipin acyltransferase 1 (414 aa).

The next 2 helical transmembrane spans lie at 47-67 (FILTLFWGSFFGSIFMLSPFL) and 86-106 (ATWLTLPVALLETMFGVKVII). Positions 123-128 (HRTRMD) match the HXXXXD motif motif. The residue at position 221 (Lys221) is an N6-acetyllysine. The next 2 membrane-spanning stretches (helical) occupy residues 340–360 (LRVLVVKLLSILYWTLFSPAM) and 362–382 (LLIYLYSLVKWYFIITIVIFV).

The protein belongs to the 1-acyl-sn-glycerol-3-phosphate acyltransferase family. Expressed at higher level in heart, kidney and pancreas than in brain, spleen, liver, lung, small intestine and placenta.

It localises to the endoplasmic reticulum membrane. The catalysed reaction is a 1-acyl-sn-glycero-3-phosphate + an acyl-CoA = a 1,2-diacyl-sn-glycero-3-phosphate + CoA. The enzyme catalyses a 1-acyl-sn-glycero-3-phospho-(1D-myo-inositol) + an acyl-CoA = a 1,2-diacyl-sn-glycero-3-phospho-(1D-myo-inositol) + CoA. It carries out the reaction 1-acyl-sn-glycero-3-phospho-(1'-sn-glycerol) + an acyl-CoA = a 1,2-diacyl-sn-glycero-3-phospho-(1'-sn-glycerol) + CoA. It catalyses the reaction 1-hexadecanoyl-sn-glycero-3-phosphate + (9Z)-octadecenoyl-CoA = 1-hexadecanoyl-2-(9Z-octadecenoyl)-sn-glycero-3-phosphate + CoA. The catalysed reaction is 1-(9Z-octadecenoyl)-sn-glycero-3-phosphate + (9Z)-octadecenoyl-CoA = 1,2-di-(9Z-octadecenoyl)-sn-glycero-3-phosphate + CoA. The enzyme catalyses 1-(9Z,12Z)-octadecadienoyl-sn-glycero-3-phosphate + (9Z)-octadecenoyl-CoA = 1-(9Z,12Z)-octadecadienoyl-2-(9Z)-octadecenoyl-sn-glycero-3-phosphate + CoA. It carries out the reaction 1-(9Z,12Z,15Z)-octadecatrienoyl-sn-glycero-3-phosphate + (9Z)-octadecenoyl-CoA = 1-(9Z,12Z,15Z)-octadecatrienoyl-2-(9Z)-octadecenoyl-sn-glycero-3-phosphate + CoA. It catalyses the reaction 1-(9Z-octadecenoyl)-sn-glycero-3-phosphate + hexadecanoyl-CoA = 1-(9Z)-octadecenoyl-2-hexadecanoyl-sn-glycero-3-phosphate + CoA. The catalysed reaction is 1-(9Z-octadecenoyl)-sn-glycero-3-phosphate + octadecanoyl-CoA = 1-(9Z-octadecenoyl)-2-octadecanoyl-sn-glycero-3-phosphate + CoA. The enzyme catalyses 1-acyl-sn-glycero-3-phospho-(1'-sn-glycerol) + (9Z)-octadecenoyl-CoA = 1-acyl-2-(9Z-octadecenoyl)-sn-glycero-3-phospho-(1'-sn-glycerol) + CoA. It carries out the reaction a 1-acyl-sn-glycero-3-phospho-(1D-myo-inositol) + (9Z)-octadecenoyl-CoA = a 1-acyl-2-(9Z-octadecenoyl)-sn-glycero-3-phospho-(1D-myo-inositol) + CoA. It catalyses the reaction 1-hexadecanoyl-sn-glycero-3-phospho-(1D-myo-inositol) + hexadecanoyl-CoA = 1,2-dihexadecanoyl-sn-glycero-3-phospho-(1D-myo-inositol) + CoA. The catalysed reaction is 1-hexadecanoyl-sn-glycero-3-phospho-(1D-myo-inositol) + octadecanoyl-CoA = 1-hexadecanoyl-2-octadecanoyl-sn-glycero-3-phospho-(1D-myo-inositol) + CoA. The enzyme catalyses 1-hexadecanoyl-sn-glycero-3-phospho-(1D-myo-inositol) + (9Z)-octadecenoyl-CoA = 1-hexadecanoyl-2-(9Z-octadecenoyl)-sn-glycero-3-phospho-(1D-myo-inositol) + CoA. It carries out the reaction 1-hexadecanoyl-sn-glycero-3-phospho-(1D-myo-inositol) + (9Z,12Z)-octadecadienoyl-CoA = 1-hexadecanoyl-2-(9Z,12Z-octadecadienoyl)-sn-glycero-3-phospho-(1D-myo-inositol) + CoA. It catalyses the reaction 1-hexadecanoyl-sn-glycero-3-phospho-(1D-myo-inositol) + (5Z,8Z,11Z,14Z)-eicosatetraenoyl-CoA = 1-hexadecanoyl-2-(5Z,8Z,11Z,14Z-eicosatetraenoyl)-sn-glycero-3-phospho-D-myo-inositol + CoA. The catalysed reaction is 1-hexadecanoyl-sn-glycero-3-phospho-(1'-sn-glycerol) + hexadecanoyl-CoA = 1,2-dihexadecanoyl-sn-glycero-3-phospho-(1'-sn-glycerol) + CoA. The enzyme catalyses 1-hexadecanoyl-sn-glycero-3-phospho-(1'-sn-glycerol) + octadecanoyl-CoA = 1-hexadecanoyl-2-octadecanoyl-sn-glycero-3-phospho-(1'-sn-glycerol) + CoA. It carries out the reaction 1-hexadecanoyl-sn-glycero-3-phospho-(1'-sn-glycerol) + (9Z)-octadecenoyl-CoA = 1-hexadecanoyl-2-(9Z-octadecenoyl)-sn-glycero-3-phospho-(1'-sn-glycerol) + CoA. It catalyses the reaction 1-hexadecanoyl-sn-glycero-3-phospho-(1'-sn-glycerol) + (9Z,12Z)-octadecadienoyl-CoA = 1-hexadecanoyl-2-(9Z,12Z-octadecadienoyl)-sn-glycero-3-phospho-(1'-sn-glycerol) + CoA. The catalysed reaction is 1-tetradecanoyl-sn-glycero-3-phospho-(1'-sn-glycerol) + (9Z)-octadecenoyl-CoA = 1-tetradecanoyl-2-(9Z-octadecenoyl)-sn-glycero-3-phospho-(1'-sn-glycerol) + CoA. The enzyme catalyses 1-octadecanoyl-sn-glycero-3-phospho-(1'-sn-glycerol) + (9Z)-octadecenoyl-CoA = 1-octadecanoyl-2-(9Z-octadecenoyl)-sn-glycero-3-phospho-(1'-sn-glycerol) + CoA. It carries out the reaction 1-(9Z-octadecenoyl)-sn-glycero-3-phospho-(1'-sn-glycerol) + (9Z)-octadecenoyl-CoA = 1,2-di-(9Z-octadecenoyl)-sn-glycero-3-phospho-(1'-sn-glycerol) + CoA. It catalyses the reaction 1-hexadecanoyl-sn-glycero-3-phospho-(1D-myo-inositol) + dodecanoyl-CoA = 1-hexadecanoyl-2-dodecanoyl-sn-glycero-3-phospho-(1D-myo-inositol) + CoA. The catalysed reaction is 1',3'-bis-[1-acyl-sn-glycero-3-phospho]-glycerol + (9Z)-octadecenoyl-CoA = 1'-[1-acyl-2-(9Z)-octadecenoyl-sn-glycero-3-phospho],3'-[1-acyl,2-hydroxy-sn-glycero-3-phospho]-glycerol + CoA. The enzyme catalyses 1'-[1,2-diacyl-sn-glycero-3-phospho],3'-[1-acyl-sn-glycero-3-phospho]-glycerol + (9Z)-octadecenoyl-CoA = 1'-[1,2-diacyl-sn-glycero-3-phospho],3'-[1-acyl,2-(9Z)-octadecenoyl-sn-glycero-3-phospho]-glycerol + CoA. It carries out the reaction 1'-[1,2-diacyl-sn-glycero-3-phospho],3'-[1-acyl-sn-glycero-3-phospho]-glycerol + (9Z,12Z)-octadecadienoyl-CoA = 1'-[1,2-diacyl-sn-glycero-3-phospho],3'-[1-acyl,2-(9Z,12Z)-octadecadienoyl-sn-glycero-3-phospho]-glycerol + CoA. It catalyses the reaction 1'-[1,2-diacyl-sn-glycero-3-phospho],3'-[1-acyl-sn-glycero-3-phospho]-glycerol + dodecanoyl-CoA = 1'-[1,2-diacyl-sn-glycero-3-phospho],3'-[1-acyl,2-dodecanoyl-sn-glycero-3-phospho]-glycerol + CoA. The catalysed reaction is 1',3'-bis-[1-acyl-sn-glycero-3-phospho]-glycerol + dodecanoyl-CoA = 1'-[1-acyl-2-dodecanoyl-sn-glycero-3-phospho],3'-[1-acyl,2-hydroxy-sn-glycero-3-phospho]-glycerol + CoA. The enzyme catalyses a 1-acyl-sn-glycero-3-phosphate + (9Z)-octadecenoyl-CoA = a 1-acyl-2-(9Z-octadecenoyl)-sn-glycero-3-phosphate + CoA. It carries out the reaction 1',3'-bis-[1-acyl-sn-glycero-3-phospho]-glycerol + (9Z,12Z)-octadecadienoyl-CoA = 1'-[1-acyl-2-(9Z,12Z)-octadecadienoyl-sn-glycero-3-phospho],3'-[1-acyl,2-hydroxy-sn-glycero-3-phospho]-glycerol + CoA. It catalyses the reaction 1',3'-bis-[1-acyl-sn-glycero-3-phospho]-glycerol + hexadecanoyl-CoA = 1'-[1-acyl-2-hexadecanoyl-sn-glycero-3-phospho],3'-[1-acyl,2-hydroxy-sn-glycero-3-phospho]-glycerol + CoA. The catalysed reaction is 1',3'-bis-[1-acyl-sn-glycero-3-phospho]-glycerol + octadecanoyl-CoA = 1'-[1-acyl-2-octadecanoyl-sn-glycero-3-phospho],3'-[1-acyl,2-hydroxy-sn-glycero-3-phospho]-glycerol + CoA. The enzyme catalyses 1'-[1,2-diacyl-sn-glycero-3-phospho],3'-[1-acyl-sn-glycero-3-phospho]-glycerol + octanoyl-CoA = 1'-[1,2-diacyl-sn-glycero-3-phospho],3'-[1-acyl,2-octanoyl-sn-glycero-3-phospho]-glycerol + CoA. It carries out the reaction 1',3'-bis-[1-acyl-sn-glycero-3-phospho]-glycerol + octanoyl-CoA = 1'-[1-acyl-2-octanoyl-sn-glycero-3-phospho],3'-[1-acyl,2-hydroxy-sn-glycero-3-phospho]-glycerol + CoA. It catalyses the reaction 1'-[1,2-diacyl-sn-glycero-3-phospho],3'-[1-acyl-sn-glycero-3-phospho]-glycerol + hexadecanoyl-CoA = 1'-[1,2-diacyl-sn-glycero-3-phospho],3'-[1-acyl,2-hexadecanoyl-sn-glycero-3-phospho]-glycerol + CoA. The catalysed reaction is 1'-[1,2-diacyl-sn-glycero-3-phospho],3'-[1-acyl-sn-glycero-3-phospho]-glycerol + (5Z,8Z,11Z,14Z)-eicosatetraenoyl-CoA = 1'-[1,2-diacyl-sn-glycero-3-phospho],3'-[1-acyl,2-(5Z,8Z,11Z,14Z)-eicosatetraenoyl-sn-glycero-3-phospho]-glycerol + CoA. The enzyme catalyses 1',3'-bis-[1-acyl-sn-glycero-3-phospho]-glycerol + (5Z,8Z,11Z,14Z)-eicosatetraenoyl-CoA = 1'-[1-acyl-2-(5Z,8Z,11Z,14Z)-eicosatetraenoyl-sn-glycero-3-phospho],3'-[1-acyl,2-hydroxy-sn-glycero-3-phospho]-glycerol + CoA. It carries out the reaction a 1-acyl-sn-glycero-3-phospho-(1D-myo-inositol) + octadecanoyl-CoA = a 1-acyl-2-octadecanoyl-sn-glycero-3-phospho-(1D-myo-inositol) + CoA. It catalyses the reaction a 2-acyl-sn-glycero-3-phospho-D-myo-inositol + octadecanoyl-CoA = 1-octadecanoyl-2-acyl-sn-glycero-3-phospho-1D-myo-inositol + CoA. It participates in phospholipid metabolism; CDP-diacylglycerol biosynthesis; CDP-diacylglycerol from sn-glycerol 3-phosphate: step 2/3. Exhibits acyl-CoA:lysocardiolipin acyltransferase (ALCAT) activity; catalyzes the reacylation of lyso-cardiolipin to cardiolipin (CL), a key step in CL remodeling. Recognizes both monolysocardiolipin and dilysocardiolipin as substrates with a preference for linoleoyl-CoA and oleoyl-CoA as acyl donors. Also exhibits 1-acyl-sn-glycerol-3-phosphate acyltransferase activity (AGPAT) activity; converts 1-acyl-sn-glycerol-3- phosphate (lysophosphatidic acid or LPA) into 1,2-diacyl-sn-glycerol-3- phosphate (phosphatidic acid or PA) by incorporating an acyl moiety at the sn-2 position of the glycerol backbone. Possesses both lysophosphatidylinositol acyltransferase (LPIAT) and lysophosphatidylglycerol acyltransferase (LPGAT) activities. Required for establishment of the hematopoietic and endothelial lineages. The sequence is that of Lysocardiolipin acyltransferase 1 (LCLAT1) from Homo sapiens (Human).